Here is a 212-residue protein sequence, read N- to C-terminus: Thymidylate kinase (212 aa).

10 to 17 (GGEGSGKT) is an ATP binding site.

Belongs to the thymidylate kinase family.

It carries out the reaction dTMP + ATP = dTDP + ADP. Its function is as follows. Phosphorylation of dTMP to form dTDP in both de novo and salvage pathways of dTTP synthesis. This Marinomonas sp. (strain MWYL1) protein is Thymidylate kinase.